The following is a 148-amino-acid chain: Large ribosomal subunit protein bL9 (148 aa).

Belongs to the bacterial ribosomal protein bL9 family.

In terms of biological role, binds to the 23S rRNA. This is Large ribosomal subunit protein bL9 from Aliarcobacter butzleri (strain RM4018) (Arcobacter butzleri).